Consider the following 560-residue polypeptide: MTTSWSDRLQNAADMPANMDKHALKKYRREAYHRVFVNRSLAMEKIKCFGFDMDYTLAVYKSPEYESLGFELTVERLVSIGYPQELLSFAYDSTFPTRGLVFDTLYGNLLKVDAYGNLLVCAHGFNFIRGPETREQYPNKFIQRDDTERFYILNTLFNLPETYLLACLVDFFTNCPRYTSCETGFKDGDLFMSYRSMFQDVRDAVDWVHYKGSLKEKTVENLEKYVVKDGKLPLLLSRMKEVGKVFLATNSDYKYTDKIMTYLFDFPHGPKPGSSHRPWQSYFDLILVDARKPLFFGEGTVLRQVDTKTGKLKIGTYTGPLQHGIVYSGGSSDTVCDLLGAKGKDILYIGDHIFGDILKSKKRQGWRTFLVIPELAQELHVWTDKSSLFEELQSLDIFLAELYKHLDSSSNERPDISSIQRRIKKVTHDMDMCYGMMGSLFRSGSRQTLFASQVMRYADLYAASFINLLYYPFSYLFRAAHVLMPHESTVEHTHVDINEMESPLATRNRTSVDFKDTDYKRHQLTRSISEIKPPNLFPLAPQEITHCHDEDDDEEEEEEE.

Residue Asp-52 is the Nucleophile of the active site. IMP-binding residues include Asp-52 and Asp-54. Mg(2+) is bound by residues Asp-52 and Asp-54. Residue Asp-54 is the Proton donor of the active site. Positions 144 and 154 each coordinate ATP. IMP contacts are provided by Arg-202, Asp-206, Lys-215, Thr-249, Asn-250, Ser-251, and Lys-292. Asp-351 is a Mg(2+) binding site. Ser-418 is subject to Phosphoserine. 2 residues coordinate ATP: Gln-453 and Arg-456. A phosphoserine mark is found at Ser-502, Ser-511, and Ser-527. Positions 541-560 are disordered; that stretch reads PQEITHCHDEDDDEEEEEEE. The interval 548–560 is required for tetramer assembly; that stretch reads HDEDDDEEEEEEE. Over residues 550–560 the composition is skewed to acidic residues; sequence EDDDEEEEEEE.

This sequence belongs to the 5'(3')-deoxyribonucleotidase family. As to quaternary structure, homotetramer. It depends on Mg(2+) as a cofactor.

The protein resides in the cytoplasm. The protein localises to the cytosol. The enzyme catalyses a ribonucleoside 5'-phosphate + H2O = a ribonucleoside + phosphate. It catalyses the reaction a 2'-deoxyribonucleoside + a ribonucleoside 5'-phosphate = a ribonucleoside + a 2'-deoxyribonucleoside 5'-phosphate. The catalysed reaction is IMP + H2O = inosine + phosphate. It carries out the reaction GMP + H2O = guanosine + phosphate. The enzyme catalyses dIMP + H2O = 2'-deoxyinosine + phosphate. It catalyses the reaction dGMP + H2O = 2'-deoxyguanosine + phosphate. The catalysed reaction is XMP + H2O = xanthosine + phosphate. It carries out the reaction inosine + GMP = guanosine + IMP. The enzyme catalyses dGMP + inosine = 2'-deoxyguanosine + IMP. It catalyses the reaction dIMP + inosine = 2'-deoxyinosine + IMP. The catalysed reaction is inosine + UMP = uridine + IMP. It carries out the reaction inosine + CMP = cytidine + IMP. The enzyme catalyses inosine + AMP = IMP + adenosine. Its activity is regulated as follows. Allosterically activated by various compounds including ATP, 2,3-BPG/2,3-Bisphosphoglyceric acid and Ap4A/P1,P4-bis(5'-adenosyl) tetraphosphate. Binding of an allosteric activator is a prerequisiste to magnesium and substrate binding. Inhibited by inorganic phosphate. Broad specificity cytosolic 5'-nucleotidase that catalyzes the dephosphorylation of 6-hydroxypurine nucleoside 5'-monophosphates. In addition, possesses a phosphotransferase activity by which it can transfer a phosphate from a donor nucleoside monophosphate to an acceptor nucleoside, preferably inosine, deoxyinosine and guanosine. Has the highest activities for IMP and GMP followed by dIMP, dGMP and XMP. Could also catalyze the transfer of phosphates from pyrimidine monophosphates but with lower efficiency. Through these activities regulates the purine nucleoside/nucleotide pools within the cell. The chain is Cytosolic purine 5'-nucleotidase from Bos taurus (Bovine).